A 530-amino-acid polypeptide reads, in one-letter code: Chaperone Ric-8A (530 aa).

The residue at position 435 (Ser-435) is a Phosphoserine; by CK2. Phosphothreonine; by CK2 is present on Thr-440. Thr-442 carries the phosphothreonine modification. Residues Ser-501, Ser-522, Ser-523, and Ser-527 each carry the phosphoserine modification.

Belongs to the synembryn family. As to quaternary structure, interacts with GDP-bound G alpha proteins GNAI1, GNAO1 and GNAQ, and with GNA13 with lower affinity. Does not interact with G-alpha proteins when they are in complex with subunits beta and gamma. Interacts (via C-terminus) with RGS14; the interaction stimulates the dissociation of the complex between RGS14 and the active GTP-bound form of GNAI1. Interacts with NCS1; interaction is favored in the absence of Ca(2+) and myristoylation of NCS1 is not required. Phosphorylated at Ser-435 and Thr-440 by CK2, stabilizing its interface with G alpha proteins.

Its subcellular location is the cytoplasm. It localises to the cell cortex. Chaperone that specifically binds and folds nascent G alpha proteins prior to G protein heterotrimer formation, promoting their stability and activity: folds GNAI1, GNAO1, GNA13 and GNAQ. Does not fold G(s) G-alpha proteins GNAS nor GNAL. Also acts as a guanine nucleotide exchange factor (GEF) for G alpha proteins by stimulating exchange of bound GDP for free GTP. Involved in regulation of microtubule pulling forces during mitotic movement of chromosomes by stimulating G(i)-alpha protein (GNAI1), possibly leading to release G(i)-alpha-GTP and NuMA proteins from the NuMA-GPSM2-G(i)-alpha-GDP complex. Also acts as an activator for G(q)-alpha (GNAQ) protein by enhancing the G(q)-coupled receptor-mediated ERK activation. In Rattus norvegicus (Rat), this protein is Chaperone Ric-8A.